Reading from the N-terminus, the 444-residue chain is ATP-dependent protease ATPase subunit HslU (444 aa).

ATP-binding positions include isoleucine 18, 60-65, aspartate 256, glutamate 321, and arginine 393; that span reads GVGKTE.

This sequence belongs to the ClpX chaperone family. HslU subfamily. In terms of assembly, a double ring-shaped homohexamer of HslV is capped on each side by a ring-shaped HslU homohexamer. The assembly of the HslU/HslV complex is dependent on binding of ATP.

Its subcellular location is the cytoplasm. ATPase subunit of a proteasome-like degradation complex; this subunit has chaperone activity. The binding of ATP and its subsequent hydrolysis by HslU are essential for unfolding of protein substrates subsequently hydrolyzed by HslV. HslU recognizes the N-terminal part of its protein substrates and unfolds these before they are guided to HslV for hydrolysis. The protein is ATP-dependent protease ATPase subunit HslU of Buchnera aphidicola subsp. Baizongia pistaciae (strain Bp).